Reading from the N-terminus, the 474-residue chain is tRNA modification GTPase MnmE (474 aa).

3 residues coordinate (6S)-5-formyl-5,6,7,8-tetrahydrofolate: R28, E92, and R131. The region spanning 227–395 is the TrmE-type G domain; sequence GIPVAIVGTT…LKGELTQIME (169 aa). N237 contacts K(+). GTP contacts are provided by residues 237-242, 256-262, 281-284, and 376-378; these read NVGKST, SDIHGTT, DTAG, and SAR. Mg(2+) is bound at residue S241. Positions 256, 258, and 261 each coordinate K(+). T262 is a Mg(2+) binding site. K474 contacts (6S)-5-formyl-5,6,7,8-tetrahydrofolate.

This sequence belongs to the TRAFAC class TrmE-Era-EngA-EngB-Septin-like GTPase superfamily. TrmE GTPase family. In terms of assembly, homodimer. Heterotetramer of two MnmE and two MnmG subunits. Requires K(+) as cofactor.

The protein resides in the cytoplasm. Exhibits a very high intrinsic GTPase hydrolysis rate. Involved in the addition of a carboxymethylaminomethyl (cmnm) group at the wobble position (U34) of certain tRNAs, forming tRNA-cmnm(5)s(2)U34. This chain is tRNA modification GTPase MnmE, found in Porphyromonas gingivalis (strain ATCC BAA-308 / W83).